The chain runs to 68 residues: uncharacterized protein (68 aa).

The signal sequence occupies residues 1–21 (MELYREYPAWLIFLRRTYAVA).

This is an uncharacterized protein from Escherichia coli O157:H7.